Here is a 331-residue protein sequence, read N- to C-terminus: UBX domain-containing protein 2B (331 aa).

Disordered stretches follow at residues 1 to 26 and 40 to 65; these read MAEG…SARD and KCKS…QRFY. Residue alanine 2 is modified to N-acetylalanine. At serine 56 the chain carries Phosphoserine. At threonine 59 the chain carries Phosphothreonine. A Phosphoserine modification is found at serine 66. The SEP domain maps to 141 to 206; sequence DVQILLKLWS…MEDHQDQEYI (66 aa). 3 positions are modified to phosphoserine: serine 231, serine 234, and serine 235. The UBX domain maps to 252 to 329; that stretch reads DSVPTTKIQI…DILNTVLLQQ (78 aa).

It belongs to the NSFL1C family. Interacts with VCP. Does not bind ubiquitin.

It is found in the nucleus. Its subcellular location is the cytoplasm. The protein resides in the cytosol. It localises to the endoplasmic reticulum. The protein localises to the golgi apparatus. It is found in the cytoskeleton. Its subcellular location is the microtubule organizing center. The protein resides in the centrosome. Its function is as follows. Adapter protein required for Golgi and endoplasmic reticulum biogenesis. Involved in Golgi and endoplasmic reticulum maintenance during interphase and in their reassembly at the end of mitosis. The complex formed with VCP has membrane fusion activity; membrane fusion activity requires USO1-GOLGA2 tethering and BET1L. VCPIP1 is also required, but not its deubiquitinating activity. Together with NSFL1C/p47, regulates the centrosomal levels of kinase AURKA/Aurora A during mitotic progression by promoting AURKA removal from centrosomes in prophase. Also, regulates spindle orientation during mitosis. This is UBX domain-containing protein 2B (UBXN2B) from Homo sapiens (Human).